Here is a 419-residue protein sequence, read N- to C-terminus: eIF5-mimic protein 1 (419 aa).

The tract at residues 1–22 is disordered; sequence MNKHQKPVLTGQRFKTRKRDEK. Lys-117 is subject to N6-acetyllysine. Positions 248–415 constitute a W2 domain; sequence VQQSLGTRKE…QNAEEESESE (168 aa). 3 positions are modified to phosphoserine: Ser-412, Ser-414, and Ser-419.

Belongs to the BZW family. As to quaternary structure, interacts with EIF3E, EIF2S2 and EIF3C. As to expression, expressed at high levels in heart, and at lower levels in skeletal muscle, spleen and lung. Expressed at low levels in brain regions where nascent and immature neurons are present.

It is found in the cytoplasm. Translation initiation regulator which represses non-AUG initiated translation and repeat-associated non-AUG (RAN) initiated translation by acting as a competitive inhibitor of eukaryotic translation initiation factor 5 (EIF5) function. Increases the accuracy of translation initiation by impeding EIF5-dependent translation from non-AUG codons by competing with it for interaction with EIF2S2 within the 43S pre-initiation complex (PIC) in an EIF3C-binding dependent manner. This is eIF5-mimic protein 1 (Bzw2) from Rattus norvegicus (Rat).